The following is a 145-amino-acid chain: Secreted RxLR effector protein 43 (145 aa).

The signal sequence occupies residues 1–20 (MKVTMALAALCVALQAPCIG). The short motif at 31–34 (RHLR) is the RxLR element.

Belongs to the RxLR effector family.

The protein resides in the secreted. Its subcellular location is the host nucleus. It localises to the host cytoplasm. Secreted effector that completely suppresses the host cell death induced by cell death-inducing proteins. This chain is Secreted RxLR effector protein 43, found in Plasmopara viticola (Downy mildew of grapevine).